The following is a 347-amino-acid chain: Heat-inducible transcription repressor HrcA (347 aa).

This sequence belongs to the HrcA family.

Functionally, negative regulator of class I heat shock genes (grpE-dnaK-dnaJ and groELS operons). Prevents heat-shock induction of these operons. This chain is Heat-inducible transcription repressor HrcA, found in Lactococcus lactis subsp. lactis (strain IL1403) (Streptococcus lactis).